A 211-amino-acid polypeptide reads, in one-letter code: tRNA (guanine-N(7)-)-methyltransferase (211 aa).

S-adenosyl-L-methionine is bound by residues Glu-43, Asp-68, and Asn-117. Substrate-binding positions include Lys-121, Asp-153, and 190–193; that span reads TEYE.

It belongs to the class I-like SAM-binding methyltransferase superfamily. TrmB family.

It catalyses the reaction guanosine(46) in tRNA + S-adenosyl-L-methionine = N(7)-methylguanosine(46) in tRNA + S-adenosyl-L-homocysteine. Its pathway is tRNA modification; N(7)-methylguanine-tRNA biosynthesis. In terms of biological role, catalyzes the formation of N(7)-methylguanine at position 46 (m7G46) in tRNA. The chain is tRNA (guanine-N(7)-)-methyltransferase from Clostridium acetobutylicum (strain ATCC 824 / DSM 792 / JCM 1419 / IAM 19013 / LMG 5710 / NBRC 13948 / NRRL B-527 / VKM B-1787 / 2291 / W).